We begin with the raw amino-acid sequence, 310 residues long: tRNA-cytidine(32) 2-sulfurtransferase (310 aa).

Residues 47-52 (SGGKDS) carry the PP-loop motif motif. 3 residues coordinate [4Fe-4S] cluster: C122, C125, and C213.

The protein belongs to the TtcA family. As to quaternary structure, homodimer. The cofactor is Mg(2+). [4Fe-4S] cluster serves as cofactor.

It localises to the cytoplasm. The enzyme catalyses cytidine(32) in tRNA + S-sulfanyl-L-cysteinyl-[cysteine desulfurase] + AH2 + ATP = 2-thiocytidine(32) in tRNA + L-cysteinyl-[cysteine desulfurase] + A + AMP + diphosphate + H(+). It participates in tRNA modification. In terms of biological role, catalyzes the ATP-dependent 2-thiolation of cytidine in position 32 of tRNA, to form 2-thiocytidine (s(2)C32). The sulfur atoms are provided by the cysteine/cysteine desulfurase (IscS) system. The chain is tRNA-cytidine(32) 2-sulfurtransferase from Haemophilus influenzae (strain PittEE).